We begin with the raw amino-acid sequence, 372 residues long: Chorismate synthase (372 aa).

Position 48 (Arg48) interacts with NADP(+). FMN-binding positions include 131–133 (RSS), 243–244 (NA), Gly288, 303–307 (KPTSS), and Arg329.

It belongs to the chorismate synthase family. In terms of assembly, homotetramer. The cofactor is FMNH2.

It carries out the reaction 5-O-(1-carboxyvinyl)-3-phosphoshikimate = chorismate + phosphate. It functions in the pathway metabolic intermediate biosynthesis; chorismate biosynthesis; chorismate from D-erythrose 4-phosphate and phosphoenolpyruvate: step 7/7. In terms of biological role, catalyzes the anti-1,4-elimination of the C-3 phosphate and the C-6 proR hydrogen from 5-enolpyruvylshikimate-3-phosphate (EPSP) to yield chorismate, which is the branch point compound that serves as the starting substrate for the three terminal pathways of aromatic amino acid biosynthesis. This reaction introduces a second double bond into the aromatic ring system. The chain is Chorismate synthase from Caulobacter vibrioides (strain ATCC 19089 / CIP 103742 / CB 15) (Caulobacter crescentus).